The following is a 340-amino-acid chain: PRKC apoptosis WT1 regulator protein (340 aa).

A compositionally biased stretch (polar residues) spans 1 to 18 (MATGGYRTSSGLGGSTTD). Positions 1-253 (MATGGYRTSS…TDRSGFPRYN (253 aa)) are disordered. The span at 47–82 (SDAAGKPPAGALGTPAAAAANELNNNLPGGAPAAPA) shows a compositional bias: low complexity. The short motif at 68 to 72 (ELNNN) is the B30.2/SPRY domain-binding motif element. Ser108 is subject to Phosphoserine. A Nuclear localization signal motif is present at residues 145–161 (RKGKGQIEKRKLREKRR). Residues 145–203 (RKGKGQIEKRKLREKRRSTGVVNIPAAECLDEYEDDEAGQKERKREDAITQQNTIQNEA) form a selective for apoptosis induction in cancer cells (SAC) region. Position 163 is a phosphothreonine; by PKA (Thr163). Positions 182 to 192 (AGQKERKREDA) are enriched in basic and acidic residues. Residues 186 to 206 (ERKREDAITQQNTIQNEAVNL) are a coiled coil. The segment covering 193–203 (ITQQNTIQNEA) has biased composition (polar residues). Ser231 bears the Phosphoserine mark. Residues 242-253 (SRTDRSGFPRYN) show a composition bias toward basic and acidic residues. A leucine-zipper region spans residues 300 to 340 (IGKLKEEIDLLNRDLDDIEDENEQLKQENKTLLKVVGQLTR).

Homooligomer. Interacts (via the C-terminal region) with WT1. Interacts with THAP1. Interacts with AATF. Interacts with BACE1. Interacts with SPSB1 (via B30.2/SPRY domain); this interaction is direct and occurs in association with the Elongin BC complex. Interacts with SPSB2 (via B30.2/SPRY domain); this interaction occurs in association with the Elongin BC complex. Interacts with SPSB4 (via B30.2/SPRY domain); this interaction occurs in association with the Elongin BC complex. Component of a ternary complex composed of SQSTM1 and PRKCZ. Interacts with actin. Post-translationally, preferentially phosphorylated at the Thr-163 by PKC in cancer cells. In terms of tissue distribution, widely expressed. Expression is elevated in various neurodegenerative diseases such as amyotrophic lateral sclerosis, Alzheimer, Parkinson and Huntington diseases and stroke. Down-regulated in several cancers.

It localises to the cytoplasm. Its subcellular location is the nucleus. Functionally, pro-apoptotic protein capable of selectively inducing apoptosis in cancer cells, sensitizing the cells to diverse apoptotic stimuli and causing regression of tumors in animal models. Induces apoptosis in certain cancer cells by activation of the Fas prodeath pathway and coparallel inhibition of NF-kappa-B transcriptional activity. Inhibits the transcriptional activation and augments the transcriptional repression mediated by WT1. Down-regulates the anti-apoptotic protein BCL2 via its interaction with WT1. Also seems to be a transcriptional repressor by itself. May be directly involved in regulating the amyloid precursor protein (APP) cleavage activity of BACE1. In Homo sapiens (Human), this protein is PRKC apoptosis WT1 regulator protein (PAWR).